The sequence spans 456 residues: GTPase Der (456 aa).

EngA-type G domains are found at residues 2 to 167 and 176 to 351; these read LKVA…DQFG and ATFC…AQLK. GTP is bound by residues 8–15, 55–59, 118–121, 182–189, 229–233, and 294–297; these read GKPNVGKS, DTGGL, NKIE, DTAGI, and NKWD. A KH-like domain is found at 352–436; it reads IKISTSLLND…PITLYFKSKN (85 aa).

Belongs to the TRAFAC class TrmE-Era-EngA-EngB-Septin-like GTPase superfamily. EngA (Der) GTPase family. As to quaternary structure, associates with the 50S ribosomal subunit.

GTPase that plays an essential role in the late steps of ribosome biogenesis. In Mycoplasmoides gallisepticum (strain R(low / passage 15 / clone 2)) (Mycoplasma gallisepticum), this protein is GTPase Der.